The following is a 955-amino-acid chain: uncharacterized protein (955 aa).

Positions 23–90 (ANNYLEEFQK…RNSLLQLFLA (68 aa)) constitute an Importin N-terminal domain.

This is an uncharacterized protein from Schizosaccharomyces pombe (strain 972 / ATCC 24843) (Fission yeast).